Here is an 85-residue protein sequence, read N- to C-terminus: MKQGIHPEYHKVIFLDTTTNFKFLSGSTKTSSETMEWEDGNEYPVIRLDVSSDSHPFYTGRQKFAAADGRVERFNKKFGLKSNNN.

Belongs to the bacterial ribosomal protein bL31 family. Type B subfamily. As to quaternary structure, part of the 50S ribosomal subunit.

The polypeptide is Large ribosomal subunit protein bL31B (Staphylococcus epidermidis (strain ATCC 35984 / DSM 28319 / BCRC 17069 / CCUG 31568 / BM 3577 / RP62A)).